A 314-amino-acid chain; its full sequence is Olfactory receptor 9Q2 (314 aa).

Over 1-25 (MAERNYTVVTEFFLTAFTEHLQWRV) the chain is Extracellular. N-linked (GlcNAc...) asparagine glycosylation occurs at Asn5. A helical transmembrane segment spans residues 26–46 (PLFLIFLSFYLATMLGNTGMI). The Cytoplasmic portion of the chain corresponds to 47-54 (LLIRGDRR). The helical transmembrane segment at 55 to 75 (LHTPMYFFLSHLSLVDICYSS) threads the bilayer. Residues 76-99 (AIIPQMLAVLWEHGTTISQARCAA) are Extracellular-facing. Cys97 and Cys189 are disulfide-bonded. The chain crosses the membrane as a helical span at residues 100 to 120 (QFFLFTFFASIDCYLLAIMAY). At 121 to 139 (DRYTAVCQPLLYVTIITEK) the chain is on the cytoplasmic side. Residues 140 to 160 (ARWGLVTGAYVAGFFSAFVRT) traverse the membrane as a helical segment. The Extracellular segment spans residues 161-197 (VTAFTLSFCGNNEINFIFCDLPPLLKLSCGDSYTQEV). Residues 198-217 (VIIVFALFVMPACILVILVS) traverse the membrane as a helical segment. The Cytoplasmic segment spans residues 218-237 (YLFIIVAILQIHSAGGRAKT). Residues 238–258 (FSTCASHLTAVALFFGTLIFM) traverse the membrane as a helical segment. The Extracellular portion of the chain corresponds to 259 to 271 (YLRDNTGQSSEGD). Residues 272–292 (RVVSVLYTVVTPMLNPLIYSL) traverse the membrane as a helical segment. Residues 293–314 (RNKEVKEATRKALSKSKPARRP) lie on the Cytoplasmic side of the membrane.

This sequence belongs to the G-protein coupled receptor 1 family.

It localises to the cell membrane. Its function is as follows. Odorant receptor. In Homo sapiens (Human), this protein is Olfactory receptor 9Q2 (OR9Q2).